Reading from the N-terminus, the 375-residue chain is Queuine tRNA-ribosyltransferase (375 aa).

Asp-90 functions as the Proton acceptor in the catalytic mechanism. Residues 90–94, Asp-144, Gln-190, and Gly-217 contribute to the substrate site; that span reads DSGGF. An RNA binding region spans residues 248–254; sequence GIGTPHY. Residue Asp-267 is the Nucleophile of the active site. Residues 272–276 are RNA binding; important for wobble base 34 recognition; the sequence is ARITR. The Zn(2+) site is built by Cys-305, Cys-307, Cys-310, and His-336.

Belongs to the queuine tRNA-ribosyltransferase family. In terms of assembly, homodimer. Within each dimer, one monomer is responsible for RNA recognition and catalysis, while the other monomer binds to the replacement base PreQ1. Zn(2+) serves as cofactor.

It carries out the reaction 7-aminomethyl-7-carbaguanine + guanosine(34) in tRNA = 7-aminomethyl-7-carbaguanosine(34) in tRNA + guanine. It participates in tRNA modification; tRNA-queuosine biosynthesis. Catalyzes the base-exchange of a guanine (G) residue with the queuine precursor 7-aminomethyl-7-deazaguanine (PreQ1) at position 34 (anticodon wobble position) in tRNAs with GU(N) anticodons (tRNA-Asp, -Asn, -His and -Tyr). Catalysis occurs through a double-displacement mechanism. The nucleophile active site attacks the C1' of nucleotide 34 to detach the guanine base from the RNA, forming a covalent enzyme-RNA intermediate. The proton acceptor active site deprotonates the incoming PreQ1, allowing a nucleophilic attack on the C1' of the ribose to form the product. After dissociation, two additional enzymatic reactions on the tRNA convert PreQ1 to queuine (Q), resulting in the hypermodified nucleoside queuosine (7-(((4,5-cis-dihydroxy-2-cyclopenten-1-yl)amino)methyl)-7-deazaguanosine). The protein is Queuine tRNA-ribosyltransferase of Borreliella burgdorferi (strain ZS7) (Borrelia burgdorferi).